Here is a 549-residue protein sequence, read N- to C-terminus: Urocanate hydratase (549 aa).

NAD(+) contacts are provided by residues 46–47 (GG), Gln-124, 170–172 (GMG), Glu-190, Arg-195, 236–237 (NA), 257–261 (QTSAH), 267–268 (YV), and Tyr-316. Cys-404 is an active-site residue. Gly-486 contributes to the NAD(+) binding site.

The protein belongs to the urocanase family. NAD(+) is required as a cofactor.

The protein localises to the cytoplasm. The catalysed reaction is 4-imidazolone-5-propanoate = trans-urocanate + H2O. It participates in amino-acid degradation; L-histidine degradation into L-glutamate; N-formimidoyl-L-glutamate from L-histidine: step 2/3. Its function is as follows. Catalyzes the conversion of urocanate to 4-imidazolone-5-propionate. The protein is Urocanate hydratase of Caldanaerobacter subterraneus subsp. tengcongensis (strain DSM 15242 / JCM 11007 / NBRC 100824 / MB4) (Thermoanaerobacter tengcongensis).